A 111-amino-acid chain; its full sequence is Iron-sulfur cluster assembly protein CyaY (111 aa).

It belongs to the frataxin family.

Functionally, involved in iron-sulfur (Fe-S) cluster assembly. May act as a regulator of Fe-S biogenesis. The polypeptide is Iron-sulfur cluster assembly protein CyaY (Cupriavidus metallidurans (strain ATCC 43123 / DSM 2839 / NBRC 102507 / CH34) (Ralstonia metallidurans)).